Here is a 389-residue protein sequence, read N- to C-terminus: MTSRKPLGRYRRIVIKIGSALLVDRKAGLKKAWLDAMCADIAGLKARGIDVLVVSSGAIALGRSVLDLPSGALKLEESQAAAAVGQIALARAWSESLSRDEIVAGQILLTLGDTEERRRYLNARATINQLLKIGAVPIINENDTVATSEIRYGDNDRLAARVATMTGADLLILLSDIDGLYTAPPHLDPNATFLETISEITPEIEAMAGGAASELSRGGMRTKIDAGKIATTSGCAMIIASGKTESPLSAIENGARSSWFAPSGTPVTARKTWIAGQLQPAGELHVDEGAVTALGAGKSLLPAGLRSVSGLFSRGDTVAIIGPAGREIARGLVSYDAEDARRIAGRKSAEIEAILGYAGRAAMVHRDDMVMTAQIRPKSERQKKDASYA.

Lys-16 is a binding site for ATP. Positions 56, 143, and 155 each coordinate substrate. 175 to 176 (SD) contacts ATP. The PUA domain maps to 281-358 (AGELHVDEGA…AEIEAILGYA (78 aa)).

Belongs to the glutamate 5-kinase family.

It localises to the cytoplasm. It carries out the reaction L-glutamate + ATP = L-glutamyl 5-phosphate + ADP. It functions in the pathway amino-acid biosynthesis; L-proline biosynthesis; L-glutamate 5-semialdehyde from L-glutamate: step 1/2. Catalyzes the transfer of a phosphate group to glutamate to form L-glutamate 5-phosphate. The protein is Glutamate 5-kinase of Rhizobium etli (strain ATCC 51251 / DSM 11541 / JCM 21823 / NBRC 15573 / CFN 42).